Reading from the N-terminus, the 257-residue chain is uncharacterized protein (257 aa).

The chain crosses the membrane as a helical span at residues 6 to 26; sequence IFWLNLAAIIIISIVVSGGMF.

The protein belongs to the staphylococcal tandem lipoprotein family.

It is found in the cell membrane. This is an uncharacterized protein from Staphylococcus aureus (strain MSSA476).